A 151-amino-acid polypeptide reads, in one-letter code: SsrA-binding protein (151 aa).

It belongs to the SmpB family.

Its subcellular location is the cytoplasm. Required for rescue of stalled ribosomes mediated by trans-translation. Binds to transfer-messenger RNA (tmRNA), required for stable association of tmRNA with ribosomes. tmRNA and SmpB together mimic tRNA shape, replacing the anticodon stem-loop with SmpB. tmRNA is encoded by the ssrA gene; the 2 termini fold to resemble tRNA(Ala) and it encodes a 'tag peptide', a short internal open reading frame. During trans-translation Ala-aminoacylated tmRNA acts like a tRNA, entering the A-site of stalled ribosomes, displacing the stalled mRNA. The ribosome then switches to translate the ORF on the tmRNA; the nascent peptide is terminated with the 'tag peptide' encoded by the tmRNA and targeted for degradation. The ribosome is freed to recommence translation, which seems to be the essential function of trans-translation. This Flavobacterium johnsoniae (strain ATCC 17061 / DSM 2064 / JCM 8514 / BCRC 14874 / CCUG 350202 / NBRC 14942 / NCIMB 11054 / UW101) (Cytophaga johnsonae) protein is SsrA-binding protein.